We begin with the raw amino-acid sequence, 298 residues long: Ribosomal RNA small subunit methyltransferase H (298 aa).

Residues 35 to 37, Asp55, Phe82, Asp100, and Gln107 contribute to the S-adenosyl-L-methionine site; that span reads GGH.

This sequence belongs to the methyltransferase superfamily. RsmH family.

The protein localises to the cytoplasm. The enzyme catalyses cytidine(1402) in 16S rRNA + S-adenosyl-L-methionine = N(4)-methylcytidine(1402) in 16S rRNA + S-adenosyl-L-homocysteine + H(+). Functionally, specifically methylates the N4 position of cytidine in position 1402 (C1402) of 16S rRNA. The chain is Ribosomal RNA small subunit methyltransferase H from Chlamydia felis (strain Fe/C-56) (Chlamydophila felis).